The following is a 187-amino-acid chain: Ribonuclease HII (187 aa).

The RNase H type-2 domain occupies 1-187 (MIILGIDEAG…YKPVQVLLNE (187 aa)). A divalent metal cation-binding residues include Asp7, Glu8, and Asp99.

It belongs to the RNase HII family. It depends on Mn(2+) as a cofactor. Mg(2+) is required as a cofactor.

Its subcellular location is the cytoplasm. The enzyme catalyses Endonucleolytic cleavage to 5'-phosphomonoester.. Its function is as follows. Endonuclease that specifically degrades the RNA of RNA-DNA hybrids. This Francisella tularensis subsp. tularensis (strain FSC 198) protein is Ribonuclease HII.